The chain runs to 182 residues: Envelope glycoprotein L (182 aa).

An N-terminal signal peptide occupies residues 1 to 39; it reads MRRSAARGRAVSSTQTAMGAGAAIAVWAAALIALYSSCA. In terms of domain architecture, gL alphaherpesvirus-type spans 52–182; the sequence is ANASDTIGRL…RPEKTAPGGV (131 aa). Cys-73 and Cys-109 are joined by a disulfide.

This sequence belongs to the herpesviridae glycoprotein L (gL) family. Alphaherpesvirinae gL subfamily. As to quaternary structure, interacts with glycoprotein H (gH); this interaction is necessary for the correct processing and cell surface expression of gH. The heterodimer gH/gL seems to interact with gB trimers during fusion. O-glycosylated, and sialylated.

It localises to the virion membrane. It is found in the host cell membrane. The protein resides in the host Golgi apparatus. Its subcellular location is the host trans-Golgi network. Its function is as follows. The heterodimer glycoprotein H-glycoprotein L is required for the fusion of viral and plasma membranes leading to virus entry into the host cell. Acts as a functional inhibitor of gH and maintains gH in an inhibited form. Upon binding to host integrins, gL dissociates from gH leading to activation of the viral fusion glycoproteins gB and gH. The polypeptide is Envelope glycoprotein L (Amazona oratrix (yellow-headed parrot)).